A 457-amino-acid chain; its full sequence is Siroheme synthase (457 aa).

Residues 1–204 (MDHLPIFCQL…NDQKAITETT (204 aa)) form a precorrin-2 dehydrogenase /sirohydrochlorin ferrochelatase region. Residues 22–23 (DV) and 43–44 (LA) contribute to the NAD(+) site. Ser128 is modified (phosphoserine). The uroporphyrinogen-III C-methyltransferase stretch occupies residues 216 to 457 (GEVVLVGAGP…RDKLNWFSNH (242 aa)). Residue Pro225 participates in S-adenosyl-L-methionine binding. The active-site Proton acceptor is Asp248. The Proton donor role is filled by Lys270. Residues 301 to 303 (GGD), Ile306, 331 to 332 (TA), Met382, and Gly411 each bind S-adenosyl-L-methionine.

It in the N-terminal section; belongs to the precorrin-2 dehydrogenase / sirohydrochlorin ferrochelatase family. The protein in the C-terminal section; belongs to the precorrin methyltransferase family.

The catalysed reaction is uroporphyrinogen III + 2 S-adenosyl-L-methionine = precorrin-2 + 2 S-adenosyl-L-homocysteine + H(+). It catalyses the reaction precorrin-2 + NAD(+) = sirohydrochlorin + NADH + 2 H(+). The enzyme catalyses siroheme + 2 H(+) = sirohydrochlorin + Fe(2+). It functions in the pathway cofactor biosynthesis; adenosylcobalamin biosynthesis; precorrin-2 from uroporphyrinogen III: step 1/1. It participates in cofactor biosynthesis; adenosylcobalamin biosynthesis; sirohydrochlorin from precorrin-2: step 1/1. Its pathway is porphyrin-containing compound metabolism; siroheme biosynthesis; precorrin-2 from uroporphyrinogen III: step 1/1. The protein operates within porphyrin-containing compound metabolism; siroheme biosynthesis; siroheme from sirohydrochlorin: step 1/1. It functions in the pathway porphyrin-containing compound metabolism; siroheme biosynthesis; sirohydrochlorin from precorrin-2: step 1/1. In terms of biological role, multifunctional enzyme that catalyzes the SAM-dependent methylations of uroporphyrinogen III at position C-2 and C-7 to form precorrin-2 via precorrin-1. Then it catalyzes the NAD-dependent ring dehydrogenation of precorrin-2 to yield sirohydrochlorin. Finally, it catalyzes the ferrochelation of sirohydrochlorin to yield siroheme. The chain is Siroheme synthase from Escherichia coli O45:K1 (strain S88 / ExPEC).